A 244-amino-acid chain; its full sequence is Protein-L-isoaspartate O-methyltransferase 2 (244 aa).

The active site involves serine 88.

It belongs to the methyltransferase superfamily. L-isoaspartyl/D-aspartyl protein methyltransferase family.

The protein resides in the cytoplasm. It carries out the reaction [protein]-L-isoaspartate + S-adenosyl-L-methionine = [protein]-L-isoaspartate alpha-methyl ester + S-adenosyl-L-homocysteine. Its function is as follows. Catalyzes the methyl esterification of L-isoaspartyl residues in peptides and proteins that result from spontaneous decomposition of normal L-aspartyl and L-asparaginyl residues. It plays a role in the repair and/or degradation of damaged proteins. The protein is Protein-L-isoaspartate O-methyltransferase 2 of Shewanella sediminis (strain HAW-EB3).